The sequence spans 367 residues: tRNA-specific 2-thiouridylase MnmA 2 (367 aa).

ATP contacts are provided by residues 10 to 17 and methionine 36; that span reads GMSGGVDS. The tract at residues 96–98 is interaction with target base in tRNA; it reads NPD. Cysteine 101 serves as the catalytic Nucleophile. A disulfide bridge links cysteine 101 with cysteine 197. Position 125 (glycine 125) interacts with ATP. The segment at 147 to 149 is interaction with tRNA; it reads KDQ. The active-site Cysteine persulfide intermediate is cysteine 197. Residues 314–315 form an interaction with tRNA region; sequence RY.

This sequence belongs to the MnmA/TRMU family.

Its subcellular location is the cytoplasm. It carries out the reaction S-sulfanyl-L-cysteinyl-[protein] + uridine(34) in tRNA + AH2 + ATP = 2-thiouridine(34) in tRNA + L-cysteinyl-[protein] + A + AMP + diphosphate + H(+). In terms of biological role, catalyzes the 2-thiolation of uridine at the wobble position (U34) of tRNA, leading to the formation of s(2)U34. This chain is tRNA-specific 2-thiouridylase MnmA 2, found in Aliarcobacter butzleri (strain RM4018) (Arcobacter butzleri).